Reading from the N-terminus, the 369-residue chain is Peptide chain release factor 2 (369 aa).

Glutamine 250 bears the N5-methylglutamine mark.

The protein belongs to the prokaryotic/mitochondrial release factor family. Post-translationally, methylated by PrmC. Methylation increases the termination efficiency of RF2.

The protein resides in the cytoplasm. In terms of biological role, peptide chain release factor 2 directs the termination of translation in response to the peptide chain termination codons UGA and UAA. The chain is Peptide chain release factor 2 (prfB) from Rickettsia prowazekii (strain Madrid E).